A 372-amino-acid chain; its full sequence is Queuine tRNA-ribosyltransferase (372 aa).

Asp-89 acts as the Proton acceptor in catalysis. Substrate is bound by residues 89–93 (DSGGF), Asp-161, and Gly-232. The RNA binding stretch occupies residues 262-268 (GIGDLPS). The active-site Nucleophile is Asp-281. Positions 286–290 (TKAAR) are RNA binding; important for wobble base 34 recognition. The Zn(2+) site is built by Cys-319, Cys-321, Cys-324, and His-351.

This sequence belongs to the queuine tRNA-ribosyltransferase family. In terms of assembly, homodimer. Within each dimer, one monomer is responsible for RNA recognition and catalysis, while the other monomer binds to the replacement base PreQ1. Zn(2+) is required as a cofactor.

It catalyses the reaction 7-aminomethyl-7-carbaguanine + guanosine(34) in tRNA = 7-aminomethyl-7-carbaguanosine(34) in tRNA + guanine. It participates in tRNA modification; tRNA-queuosine biosynthesis. In terms of biological role, catalyzes the base-exchange of a guanine (G) residue with the queuine precursor 7-aminomethyl-7-deazaguanine (PreQ1) at position 34 (anticodon wobble position) in tRNAs with GU(N) anticodons (tRNA-Asp, -Asn, -His and -Tyr). Catalysis occurs through a double-displacement mechanism. The nucleophile active site attacks the C1' of nucleotide 34 to detach the guanine base from the RNA, forming a covalent enzyme-RNA intermediate. The proton acceptor active site deprotonates the incoming PreQ1, allowing a nucleophilic attack on the C1' of the ribose to form the product. After dissociation, two additional enzymatic reactions on the tRNA convert PreQ1 to queuine (Q), resulting in the hypermodified nucleoside queuosine (7-(((4,5-cis-dihydroxy-2-cyclopenten-1-yl)amino)methyl)-7-deazaguanosine). The protein is Queuine tRNA-ribosyltransferase of Chlamydia caviae (strain ATCC VR-813 / DSM 19441 / 03DC25 / GPIC) (Chlamydophila caviae).